Consider the following 333-residue polypeptide: NADH-quinone oxidoreductase subunit H (333 aa).

A run of 8 helical transmembrane segments spans residues 15-35 (LVIF…FVTY), 88-108 (FILA…TLPF), 117-137 (IGVG…GVVA), 159-179 (ISYE…TGSL), 191-211 (VWYI…AVAE), 250-270 (LFAM…PVMF), 273-293 (FIPG…VLIW), and 313-333 (VLFP…ELFF).

The protein belongs to the complex I subunit 1 family. In terms of assembly, NDH-1 is composed of 14 different subunits. Subunits NuoA, H, J, K, L, M, N constitute the membrane sector of the complex.

Its subcellular location is the cell membrane. The catalysed reaction is a quinone + NADH + 5 H(+)(in) = a quinol + NAD(+) + 4 H(+)(out). Its function is as follows. NDH-1 shuttles electrons from NADH, via FMN and iron-sulfur (Fe-S) centers, to quinones in the respiratory chain. The immediate electron acceptor for the enzyme in this species is believed to be ubiquinone. Couples the redox reaction to proton translocation (for every two electrons transferred, four hydrogen ions are translocated across the cytoplasmic membrane), and thus conserves the redox energy in a proton gradient. This subunit may bind ubiquinone. This Geobacillus sp. (strain WCH70) protein is NADH-quinone oxidoreductase subunit H.